Reading from the N-terminus, the 901-residue chain is Modifier of cell death (901 aa).

2 disordered regions span residues 147–169 and 218–245; these read AQKR…PRAA and PRKS…SPSP. Residues 259-282 form a C2H2-type zinc finger; the sequence is FKCAECGDGFPVMDRLCDHMIKQH. 3 disordered regions span residues 494–528, 682–717, and 779–901; these read KKEH…DDVP, QERV…SHEE, and HKAI…WDDN. Residues 817–828 show a composition bias toward low complexity; it reads EAAAKLIQAENE. The span at 829 to 840 shows a compositional bias: acidic residues; sequence MVVEEEEVEEPP. The segment covering 846 to 866 has biased composition (basic and acidic residues); it reads QVPKEKEVEVAEAEKLPEQVK.

Its function is as follows. Promotes programmed cell death. Its role in programmed cell death may be in conjunction with cell cycle regulatory factor efl-1 and the synthetic multivulva class B proteins dpl-1 and lin-35, and is independent of the ced-1, ced-8 and ced-9 pathways. The polypeptide is Modifier of cell death (Caenorhabditis elegans).